Reading from the N-terminus, the 262-residue chain is Acyl-coenzyme A diphosphatase FITM2 (262 aa).

Residues 1–23 (MEHLERCAWVLRGTLVRAAVRRY) lie on the Cytoplasmic side of the membrane. A helical membrane pass occupies residues 24 to 44 (LPWALAASMLAGSLLKELSPL). Topologically, residues 45–57 (PESYLSNKRNVLN) are lumenal. Residues 58–78 (VYFVKVAWAWTFCLLLPFIAL) form a helical membrane-spanning segment. At 79–93 (TNYHLTGKAGLVLRR) the chain is on the cytoplasmic side. Residues 94-114 (LSTLLVGTAIWYVCTAIFSNV) traverse the membrane as a helical segment. The Lumenal portion of the chain corresponds to 115-145 (EHYTGSCYQSPALEGVRNEPLSKQQCHGQGG). Residues 146-166 (FWHGFDISGHSFLLTFCALMI) traverse the membrane as a helical segment. Residue His-155 is part of the active site. Over 167–185 (VEEMAVLHEVKTDRSHCLH) the chain is Cytoplasmic. Residues 186–206 (VAITALVVALGFLTFIWVWMF) form a helical membrane-spanning segment. Over 207–218 (LCTAVYFHNLSQ) the chain is Lumenal. Residue His-214 is part of the active site. The helical transmembrane segment at 219–239 (KVFGTLFGLLGWYGTYGFWYL) threads the bilayer. Residues 240 to 262 (KSFSPGLPPQSCSSNLKQDSYKR) lie on the Cytoplasmic side of the membrane.

Belongs to the FIT family. FIT2 subfamily.

It is found in the endoplasmic reticulum membrane. It catalyses the reaction an acyl-CoA + H2O = an acyl-4'-phosphopantetheine + adenosine 3',5'-bisphosphate + 2 H(+). The catalysed reaction is (9Z)-octadecenoyl-CoA + H2O = S-(9Z-octadecenoyl)-4'-phosphopantetheine + adenosine 3',5'-bisphosphate + 2 H(+). The enzyme catalyses (5Z,8Z,11Z,14Z)-eicosatetraenoyl-CoA + H2O = S-(5Z,8Z,11Z,14Z-eicosatetraenoyl)-4'-phosphopantetheine + adenosine 3',5'-bisphosphate + 2 H(+). It carries out the reaction hexadecanoyl-CoA + H2O = S-hexadecanoyl-4'-phosphopantetheine + adenosine 3',5'-bisphosphate + 2 H(+). Its function is as follows. Fatty acyl-coenzyme A (CoA) diphosphatase that hydrolyzes fatty acyl-CoA to yield acyl-4'-phosphopantetheine and adenosine 3',5'-bisphosphate. Preferentially hydrolyzes unsaturated long-chain acyl-CoA substrates such as oleoyl-CoA/(9Z)-octadecenoyl-CoA and arachidonoyl-CoA/(5Z,8Z,11Z,14Z)-eicosatetraenoyl-CoA in the endoplasmic reticulum (ER) lumen. This catalytic activity is required for maintaining ER structure and for lipid droplets (LDs) biogenesis, which are lipid storage organelles involved in maintaining lipid and energy homeostasis. Directly binds to diacylglycerol (DAGs) and triacylglycerol, which is also important for LD biogenesis. May support directional budding of nacent LDs from the ER into the cytosol by reducing DAG levels at sites of LD formation. Plays a role in the regulation of cell morphology and cytoskeletal organization. In Sus scrofa (Pig), this protein is Acyl-coenzyme A diphosphatase FITM2.